The sequence spans 470 residues: Histone deacetylase HOS1 (470 aa).

The tract at residues 47–392 is histone deacetylase; that stretch reads LTFPYARKDD…YTYLTWCVTK (346 aa). Serine 110 carries the post-translational modification Phosphoserine. Histidine 211 is an active-site residue.

This sequence belongs to the histone deacetylase family. HD type 1 subfamily.

The protein localises to the nucleus. It catalyses the reaction N(6)-acetyl-L-lysyl-[histone] + H2O = L-lysyl-[histone] + acetate. Responsible for the deacetylation of lysine residues on the N-terminal part of the core histones (H2A, H2B, H3 and H4). Histone deacetylation plays an important role in transcriptional regulation, cell cycle progression and developmental events. Histone deacetylases act via the formation of large multiprotein complexes. This Saccharomyces cerevisiae (strain ATCC 204508 / S288c) (Baker's yeast) protein is Histone deacetylase HOS1 (HOS1).